A 201-amino-acid chain; its full sequence is Large ribosomal subunit protein uL4 (201 aa).

The disordered stretch occupies residues 39-72 (RRGTASTKTRAQVSKSGKKMYSQKGTGNARHGDR). The segment covering 42–53 (TASTKTRAQVSK) has biased composition (polar residues).

Belongs to the universal ribosomal protein uL4 family. In terms of assembly, part of the 50S ribosomal subunit.

One of the primary rRNA binding proteins, this protein initially binds near the 5'-end of the 23S rRNA. It is important during the early stages of 50S assembly. It makes multiple contacts with different domains of the 23S rRNA in the assembled 50S subunit and ribosome. Functionally, forms part of the polypeptide exit tunnel. In Deinococcus deserti (strain DSM 17065 / CIP 109153 / LMG 22923 / VCD115), this protein is Large ribosomal subunit protein uL4.